A 93-amino-acid chain; its full sequence is MDGIKYAVFTDKSIRLLGKNQYTSNVESGSTRTEIKHWVELFFGVKVIAMNSHRLPGRGRRMGPIMGQTMHYRRMIITLQPGYSIPPLRKKRT.

It belongs to the universal ribosomal protein uL23 family. As to quaternary structure, part of the 50S ribosomal subunit.

Its subcellular location is the plastid. It is found in the chloroplast. Its function is as follows. Binds to 23S rRNA. The chain is Large ribosomal subunit protein uL23cz/uL23cy (rpl23-A) from Panax ginseng (Korean ginseng).